Consider the following 161-residue polypeptide: Large-conductance mechanosensitive channel (161 aa).

Transmembrane regions (helical) follow at residues 21 to 41 (VGVI…DGVI) and 79 to 99 (GAFI…FLLV). Over residues 142–154 (TAAPKAAAAPVAK) the composition is skewed to low complexity. Residues 142-161 (TAAPKAAAAPVAKPKTKPKA) are disordered.

It belongs to the MscL family. In terms of assembly, homopentamer.

The protein localises to the cell inner membrane. Channel that opens in response to stretch forces in the membrane lipid bilayer. May participate in the regulation of osmotic pressure changes within the cell. This chain is Large-conductance mechanosensitive channel, found in Caulobacter sp. (strain K31).